Consider the following 280-residue polypeptide: S-methyl-5'-thioadenosine phosphorylase (280 aa).

Phosphate-binding positions include serine 18, 60 to 61 (RH), and 93 to 94 (TA). Methionine 196 contributes to the substrate binding site. Phosphate is bound at residue threonine 197. Position 220–222 (220–222 (DYD)) interacts with substrate.

Belongs to the PNP/MTAP phosphorylase family. MTAP subfamily. In terms of assembly, homotrimer.

Its subcellular location is the cytoplasm. The protein resides in the nucleus. It catalyses the reaction S-methyl-5'-thioadenosine + phosphate = 5-(methylsulfanyl)-alpha-D-ribose 1-phosphate + adenine. It participates in amino-acid biosynthesis; L-methionine biosynthesis via salvage pathway; S-methyl-5-thio-alpha-D-ribose 1-phosphate from S-methyl-5'-thioadenosine (phosphorylase route): step 1/1. In terms of biological role, catalyzes the reversible phosphorylation of S-methyl-5'-thioadenosine (MTA) to adenine and 5-methylthioribose-1-phosphate. Involved in the breakdown of MTA, a major by-product of polyamine biosynthesis. Responsible for the first step in the methionine salvage pathway after MTA has been generated from S-adenosylmethionine. Has broad substrate specificity with 6-aminopurine nucleosides as preferred substrates. This chain is S-methyl-5'-thioadenosine phosphorylase, found in Ciona intestinalis (Transparent sea squirt).